Consider the following 248-residue polypeptide: MNAVEQISGYGLSATDEPVQLPARPEPLAMKASETALIVVDMQNAYASRGGYLDLAGFDVSATQPVIAKIRQALNAARAAGMQVIFLQNGWDNGYVEAGGPGSPNWHKSNALKTMRKRPELAGTLLAKGGWDYALVDELAPQPGDILVPKPRYSGFFNSQLDSTLRARGIRNLVFTGIATNVCVESTLRDGFHLEYFGVVLADATHQAGPEFAQQAALYNIETFFGWVSSVDAFCQSFAAAPEVAVAS.

The active-site Proton acceptor is the aspartate 41. Lysine 150 is a catalytic residue. The active-site Nucleophile is cysteine 183.

This sequence belongs to the isochorismatase family. RutB subfamily.

It carries out the reaction (Z)-3-ureidoacrylate + H2O + H(+) = (Z)-3-aminoacrylate + NH4(+) + CO2. The catalysed reaction is (Z)-3-ureidoacrylate + H2O = (Z)-3-aminoacrylate + carbamate + H(+). It catalyses the reaction (Z)-2-methylureidoacrylate + H2O + H(+) = (Z)-2-methylaminoacrylate + NH4(+) + CO2. In terms of biological role, hydrolyzes ureidoacrylate to form aminoacrylate and carbamate. The carbamate hydrolyzes spontaneously, thereby releasing one of the nitrogen atoms of the pyrimidine ring as ammonia and one of its carbon atoms as CO2. In Stutzerimonas stutzeri (strain A1501) (Pseudomonas stutzeri), this protein is Ureidoacrylate amidohydrolase RutB.